The primary structure comprises 129 residues: 3-aminoacrylate deaminase RutC (129 aa).

This sequence belongs to the RutC family.

It catalyses the reaction (Z)-3-aminoacrylate + H2O + H(+) = 3-oxopropanoate + NH4(+). Its function is as follows. Involved in pyrimidine catabolism. Catalyzes the deamination of 3-aminoacrylate to malonic semialdehyde, a reaction that can also occur spontaneously. RutC may facilitate the reaction and modulate the metabolic fitness, rather than catalyzing essential functions. This chain is 3-aminoacrylate deaminase RutC, found in Caulobacter vibrioides (strain ATCC 19089 / CIP 103742 / CB 15) (Caulobacter crescentus).